Here is a 122-residue protein sequence, read N- to C-terminus: Putative protein adenylyltransferase MJ1547 (122 aa).

Residues 11–25 (GSYAKNEYTKRSDID) carry the GSX(10)DXD motif motif. Mg(2+) is bound by residues aspartate 23, aspartate 25, and aspartate 48.

Belongs to the MntA antitoxin family. Probably forms a complex with cognate toxin MJ1548. The cofactor is Mg(2+).

It catalyses the reaction L-tyrosyl-[protein] + ATP = O-(5'-adenylyl)-L-tyrosyl-[protein] + diphosphate. It carries out the reaction O-(5'-adenylyl)-L-tyrosyl-[protein] + ATP = O-[5'-(adenylyl-(5'-&gt;3')-adenylyl)]-L-tyrosyl-[protein] + diphosphate. In terms of biological role, probable antitoxin component of a putative type VII toxin-antitoxin (TA) system. Neutralizes cognate toxic MJ1548 by di-AMPylation. This Methanocaldococcus jannaschii (strain ATCC 43067 / DSM 2661 / JAL-1 / JCM 10045 / NBRC 100440) (Methanococcus jannaschii) protein is Putative protein adenylyltransferase MJ1547.